The primary structure comprises 153 residues: Bud site selection protein 25 (153 aa).

In terms of biological role, involved in bud site selection. Required for resistance to the DNA-damaging agent methyl methanesulfonate (MMS). The chain is Bud site selection protein 25 from Saccharomyces cerevisiae (strain ATCC 204508 / S288c) (Baker's yeast).